The primary structure comprises 565 residues: Oxygen-dependent choline dehydrogenase (565 aa).

Position 7–36 (Asp7–Glu36) interacts with FAD. The active-site Proton acceptor is His474.

Belongs to the GMC oxidoreductase family. FAD serves as cofactor.

It catalyses the reaction choline + A = betaine aldehyde + AH2. It carries out the reaction betaine aldehyde + NAD(+) + H2O = glycine betaine + NADH + 2 H(+). Its pathway is amine and polyamine biosynthesis; betaine biosynthesis via choline pathway; betaine aldehyde from choline (cytochrome c reductase route): step 1/1. Its function is as follows. Involved in the biosynthesis of the osmoprotectant glycine betaine. Catalyzes the oxidation of choline to betaine aldehyde and betaine aldehyde to glycine betaine at the same rate. The polypeptide is Oxygen-dependent choline dehydrogenase (Burkholderia thailandensis (strain ATCC 700388 / DSM 13276 / CCUG 48851 / CIP 106301 / E264)).